We begin with the raw amino-acid sequence, 372 residues long: GDP-mannose 4,6 dehydratase (372 aa).

The segment at 1–20 (MAHAPARCPSARGSGDGEMG) is disordered. Ala2 carries the N-acetylalanine modification. Residues 30–35 (GITGQD), 55–58 (RRSS), 86–87 (DL), 108–112 (LGAQS), and Tyr123 each bind NADP(+). The active site involves Thr155. Residues Glu157 and Tyr179 each act as nucleophile in the active site. NADP(+) is bound by residues Lys183, His209, and Arg214. The residue at position 323 (Tyr323) is a Phosphotyrosine.

This sequence belongs to the NAD(P)-dependent epimerase/dehydratase family. GDP-mannose 4,6-dehydratase subfamily. It depends on NADP(+) as a cofactor. In terms of tissue distribution, highly expressed in pancreas and small intestine. Expressed in thymus, protstate, colon, heart, placenta, liver and kidney. Expressed at low levels in spleen, testis, brain and lung.

The enzyme catalyses GDP-alpha-D-mannose = GDP-4-dehydro-alpha-D-rhamnose + H2O. It functions in the pathway nucleotide-sugar biosynthesis; GDP-L-fucose biosynthesis via de novo pathway; GDP-L-fucose from GDP-alpha-D-mannose: step 1/2. Inhibited by GDP-fucose. Catalyzes the conversion of GDP-D-mannose to GDP-4-dehydro-6-deoxy-D-mannose. The protein is GDP-mannose 4,6 dehydratase of Homo sapiens (Human).